The primary structure comprises 140 residues: Oleosin Cor a 13 (140 aa).

The next 2 helical transmembrane spans lie at 31-51 (GSLL…LTLA) and 75-95 (GFLA…WIYR).

This sequence belongs to the oleosin family. Expressed in seeds.

It localises to the lipid droplet. The protein localises to the membrane. May have a structural role to stabilize the lipid body during desiccation of the seed by preventing coalescence of the oil. Probably interacts with both lipid and phospholipid moieties of lipid bodies. May also provide recognition signals for specific lipase anchorage in lipolysis during seedling growth. In Corylus avellana (European hazel), this protein is Oleosin Cor a 13.